The primary structure comprises 37 residues: DMKIGVSMSQFDDTHLTYLQQSMDEKAKSYPDGVVLL.

It belongs to the bacterial solute-binding protein 2 family.

The protein resides in the periplasm. This chain is Myo-inositol-binding protein, found in Pseudomonas sp.